The chain runs to 973 residues: DNA repair protein rhp26 (973 aa).

A coiled-coil region spans residues 35-107; the sequence is ESREIEKKRL…DIKRRLNNED (73 aa). Residues 230–251 form a disordered region; the sequence is RDQASASENNKDRGEFEGKDEW. Positions 238–251 are enriched in basic and acidic residues; the sequence is NNKDRGEFEGKDEW. One can recognise a Helicase ATP-binding domain in the interval 289-490; the sequence is WELYCQEAGG…WNLFDFVFPG (202 aa). 302–309 contacts ATP; sequence DEMGLGKT. The interval 367–386 is disordered; sequence SREKRQYESDASESEAEESK. The short motif at 441 to 444 is the DEAH box element; the sequence is DEGH. Residues 629–789 form the Helicase C-terminal domain; it reads VIRALLTLWK…RRFFKMTDLH (161 aa). Disordered stretches follow at residues 803 to 846, 863 to 882, and 930 to 973; these read ETGS…KGKK, KYKP…STLG, and AVSS…KQRR. Residues 834–846 are compositionally biased toward basic residues; the sequence is DRKKHKIHDKGKK. Composition is skewed to polar residues over residues 868-882 and 947-965; these read QESN…STLG and STNV…SSTL.

It localises to the cytoplasm. Its subcellular location is the nucleus. Functionally, involved in transcription-coupled repair (TCR). The protein is DNA repair protein rhp26 (rhp26) of Schizosaccharomyces pombe (strain 972 / ATCC 24843) (Fission yeast).